A 337-amino-acid polypeptide reads, in one-letter code: Succinylglutamate desuccinylase (337 aa).

3 residues coordinate Zn(2+): His59, Glu62, and His152. Glu216 is an active-site residue.

It belongs to the AspA/AstE family. Succinylglutamate desuccinylase subfamily. Zn(2+) is required as a cofactor.

It catalyses the reaction N-succinyl-L-glutamate + H2O = L-glutamate + succinate. Its pathway is amino-acid degradation; L-arginine degradation via AST pathway; L-glutamate and succinate from L-arginine: step 5/5. Its function is as follows. Transforms N(2)-succinylglutamate into succinate and glutamate. This Ectopseudomonas mendocina (strain ymp) (Pseudomonas mendocina) protein is Succinylglutamate desuccinylase.